The following is a 439-amino-acid chain: D-inositol 3-phosphate glycosyltransferase (439 aa).

1D-myo-inositol 3-phosphate is bound at residue H21. UDP-N-acetyl-alpha-D-glucosamine contacts are provided by residues 27 to 28 and G35; that span reads QP. 1D-myo-inositol 3-phosphate-binding positions include 32-37, K90, Y123, T147, and R167; that span reads DAGGMN. Residues R241, K246, and Q299 each coordinate UDP-N-acetyl-alpha-D-glucosamine. 3 residues coordinate Mg(2+): Y308, R309, and A311. E321 and E329 together coordinate UDP-N-acetyl-alpha-D-glucosamine. Mg(2+) is bound at residue T335.

This sequence belongs to the glycosyltransferase group 1 family. MshA subfamily. As to quaternary structure, homodimer.

The catalysed reaction is 1D-myo-inositol 3-phosphate + UDP-N-acetyl-alpha-D-glucosamine = 1D-myo-inositol 2-acetamido-2-deoxy-alpha-D-glucopyranoside 3-phosphate + UDP + H(+). Catalyzes the transfer of a N-acetyl-glucosamine moiety to 1D-myo-inositol 3-phosphate to produce 1D-myo-inositol 2-acetamido-2-deoxy-glucopyranoside 3-phosphate in the mycothiol biosynthesis pathway. This is D-inositol 3-phosphate glycosyltransferase from Mycobacterium sp. (strain KMS).